Consider the following 202-residue polypeptide: Peptide deformylase (202 aa).

The segment at 1–24 (MAGSFAQLAKNAEKKKPSISVSKE) is disordered. 2 residues coordinate Fe cation: cysteine 121 and histidine 163. Glutamate 164 is a catalytic residue. Residue histidine 167 participates in Fe cation binding.

The protein belongs to the polypeptide deformylase family. The cofactor is Fe(2+).

The enzyme catalyses N-terminal N-formyl-L-methionyl-[peptide] + H2O = N-terminal L-methionyl-[peptide] + formate. Functionally, removes the formyl group from the N-terminal Met of newly synthesized proteins. Requires at least a dipeptide for an efficient rate of reaction. N-terminal L-methionine is a prerequisite for activity but the enzyme has broad specificity at other positions. The protein is Peptide deformylase of Prochlorococcus marinus (strain NATL1A).